The sequence spans 459 residues: Putrescine aminotransferase (459 aa).

Residues 150–151 (GT) and Gln-274 each bind pyridoxal 5'-phosphate. Position 300 is an N6-(pyridoxal phosphate)lysine (Lys-300). Residue Thr-332 coordinates pyridoxal 5'-phosphate.

This sequence belongs to the class-III pyridoxal-phosphate-dependent aminotransferase family. Putrescine aminotransferase subfamily. Requires pyridoxal 5'-phosphate as cofactor.

The enzyme catalyses an alkane-alpha,omega-diamine + 2-oxoglutarate = an omega-aminoaldehyde + L-glutamate. The catalysed reaction is putrescine + 2-oxoglutarate = 1-pyrroline + L-glutamate + H2O. It catalyses the reaction cadaverine + 2-oxoglutarate = 5-aminopentanal + L-glutamate. Its pathway is amine and polyamine degradation; putrescine degradation; 4-aminobutanal from putrescine (transaminase route): step 1/1. Its function is as follows. Catalyzes the aminotransferase reaction from putrescine to 2-oxoglutarate, leading to glutamate and 4-aminobutanal, which spontaneously cyclizes to form 1-pyrroline. This is the first step in one of two pathways for putrescine degradation, where putrescine is converted into 4-aminobutanoate (gamma-aminobutyrate or GABA) via 4-aminobutanal. Also functions as a cadaverine transaminase in a a L-lysine degradation pathway to succinate that proceeds via cadaverine, glutarate and L-2-hydroxyglutarate. In Escherichia coli (strain ATCC 8739 / DSM 1576 / NBRC 3972 / NCIMB 8545 / WDCM 00012 / Crooks), this protein is Putrescine aminotransferase.